An 83-amino-acid chain; its full sequence is Hainantoxin-III 12 (83 aa).

The N-terminal stretch at 1–21 is a signal peptide; the sequence is MKASMFLALAGLVLLFVVGYA. A propeptide spanning residues 22–48 is cleaved from the precursor; the sequence is SGSEEKEFPRELLSKIFAVDDFKGEER. 3 cysteine pairs are disulfide-bonded: C50-C65, C57-C70, and C64-C77. L81 carries the leucine amide modification.

It belongs to the neurotoxin 10 (Hwtx-1) family. 15 (Hntx-3) subfamily. In terms of assembly, monomer. As to expression, expressed by the venom gland.

The protein localises to the secreted. Its function is as follows. Selective antagonist of neuronal tetrodotoxin (TTX)-sensitive voltage-gated sodium channels (IC(50)=1270 nM on Nav1.1/SCN1A, 270 nM on Nav1.2/SCN2A, 491 nM on Nav1.3/SCN3A and 232 nM on Nav1.7/SCN9A). This toxin suppress Nav1.7 current amplitude without significantly altering the activation, inactivation, and repriming kinetics. Short extreme depolarizations partially activate the toxin-bound channel, indicating voltage-dependent inhibition of this toxin. This toxin increases the deactivation of the Nav1.7 current after extreme depolarizations. The toxin-Nav1.7 complex is gradually dissociated upon prolonged strong depolarizations in a voltage-dependent manner, and the unbound toxin rebinds to Nav1.7 after a long repolarization. Moreover, analysis of chimeric channels showed that the DIIS3-S4 linker is critical for toxin binding to Nav1.7. These data are consistent with this toxin interacting with Nav1.7 site 4 and trapping the domain II voltage sensor in the closed state. The polypeptide is Hainantoxin-III 12 (Cyriopagopus hainanus (Chinese bird spider)).